A 218-amino-acid polypeptide reads, in one-letter code: MTVLNARERKDQKAHQTKELRNQGHVPGVLYGKKVKSTPVSVEAVAFLKTFRDVGQNGLFDLQLENGGKHHVMVQEVQIDPLNNQYMHVDFFEVDMNEERDVNVPVHLEGDAPGAKEGGIVNHLLYEITVHCLPADIPESITVDISNLNIGDSLSVSDIRANVPVTIVNEDDETVVTVTPPTVTEDPDATEEDNTTAESVEATGERNDDNLDRPGRVE.

Residues 178–218 form a disordered region; sequence VTPPTVTEDPDATEEDNTTAESVEATGERNDDNLDRPGRVE. Residues 185-195 are compositionally biased toward acidic residues; that stretch reads EDPDATEEDNT. The segment covering 203-218 has biased composition (basic and acidic residues); it reads TGERNDDNLDRPGRVE.

Belongs to the bacterial ribosomal protein bL25 family. CTC subfamily. In terms of assembly, part of the 50S ribosomal subunit; part of the 5S rRNA/L5/L18/L25 subcomplex. Contacts the 5S rRNA. Binds to the 5S rRNA independently of L5 and L18.

Its function is as follows. This is one of the proteins that binds to the 5S RNA in the ribosome where it forms part of the central protuberance. The protein is Large ribosomal subunit protein bL25 of Shouchella clausii (strain KSM-K16) (Alkalihalobacillus clausii).